We begin with the raw amino-acid sequence, 363 residues long: Phosphate acyltransferase (363 aa).

Residues 326 to 363 (ADSHPSKVNAGENAPPLASASNPSPEALPVGSLDRVEG) form a disordered region. A compositionally biased stretch (low complexity) spans 337 to 354 (ENAPPLASASNPSPEALP).

Belongs to the PlsX family. Homodimer. Probably interacts with PlsY.

The protein resides in the cytoplasm. It catalyses the reaction a fatty acyl-[ACP] + phosphate = an acyl phosphate + holo-[ACP]. It participates in lipid metabolism; phospholipid metabolism. Its function is as follows. Catalyzes the reversible formation of acyl-phosphate (acyl-PO(4)) from acyl-[acyl-carrier-protein] (acyl-ACP). This enzyme utilizes acyl-ACP as fatty acyl donor, but not acyl-CoA. The protein is Phosphate acyltransferase of Synechococcus sp. (strain JA-3-3Ab) (Cyanobacteria bacterium Yellowstone A-Prime).